The chain runs to 620 residues: MDSHTLLQALIYLGSAALIVPIAVRLGLGSVLGYLIAGCIIGPWGLRLVTDAESILHFAEIGVVLMLFVIGLELDPQRLWKLRASVFGGGALQMVVCGGLIGLFCMFLGLRWQVAELIGMTLALSSTAIAMQAMNERNLTVSQVGRSAFAVLLFQDIAAIPLVAMIPLLAASGASTTLGAFALSALKVAGALALVVLLGRYVTRPALRFVARSGLREVFSAVALFLVFGFGLLLEEVGLSMAMGAFLAGVLLASSEYRHALESDIEPFKGLLLGLFFIGVGMSIDFGTLVENPLRILLLLAGFLAIKIVMLWLVARPLGVPAKQRRWFAVLLGQGSEFAFVVFGAAQMAGVLEPEWAKALTLAVALSMAATPIFLMLLTRMEKTEKGEAREADEIDEEQPRVIVAGFGRFGQIAGRLLLSSGVKMVVLDHDPDHIETLRKFGMKVFYGDATRMDLLESAGAAKAEVLINAIDDPQTNLQLSELVKSHFPHLQIIARARDVDHYIRLRQAGVAMPERETFEGALKSGRQALEALGLGRYEARERADLFRHFNTRMVEEMAKGENDPLSRAAAYKRTSAMLSEIITEDREHLSLIQRHGWQGTAEGKHSGEAADEPEVKPSI.

12 helical membrane passes run His-4–Val-24, Leu-26–Leu-46, Ser-54–Leu-74, Gly-90–Leu-110, Val-114–Met-134, Phe-149–Leu-169, Leu-178–Leu-198, Val-218–Gly-238, Gly-270–Val-290, Leu-294–Val-314, Trp-327–Gln-347, and Ala-359–Thr-379. An RCK N-terminal domain is found at Gln-399–Thr-518. Residues Gln-599–Ile-620 are disordered.

It belongs to the monovalent cation:proton antiporter 2 (CPA2) transporter (TC 2.A.37) family. KefC subfamily. As to quaternary structure, homodimer. Interacts with the regulatory subunit KefF.

It is found in the cell inner membrane. In terms of biological role, pore-forming subunit of a potassium efflux system that confers protection against electrophiles. Catalyzes K(+)/H(+) antiport. The protein is Glutathione-regulated potassium-efflux system protein KefC of Salmonella heidelberg (strain SL476).